Consider the following 211-residue polypeptide: ATP phosphoribosyltransferase (211 aa).

It belongs to the ATP phosphoribosyltransferase family. Short subfamily. Heteromultimer composed of HisG and HisZ subunits.

It localises to the cytoplasm. The catalysed reaction is 1-(5-phospho-beta-D-ribosyl)-ATP + diphosphate = 5-phospho-alpha-D-ribose 1-diphosphate + ATP. It participates in amino-acid biosynthesis; L-histidine biosynthesis; L-histidine from 5-phospho-alpha-D-ribose 1-diphosphate: step 1/9. In terms of biological role, catalyzes the condensation of ATP and 5-phosphoribose 1-diphosphate to form N'-(5'-phosphoribosyl)-ATP (PR-ATP). Has a crucial role in the pathway because the rate of histidine biosynthesis seems to be controlled primarily by regulation of HisG enzymatic activity. This is ATP phosphoribosyltransferase from Pseudomonas putida (strain GB-1).